Here is a 255-residue protein sequence, read N- to C-terminus: Imidazole glycerol phosphate synthase subunit HisF (255 aa).

Active-site residues include Asp11 and Asp130.

The protein belongs to the HisA/HisF family. As to quaternary structure, heterodimer of HisH and HisF.

The protein resides in the cytoplasm. The catalysed reaction is 5-[(5-phospho-1-deoxy-D-ribulos-1-ylimino)methylamino]-1-(5-phospho-beta-D-ribosyl)imidazole-4-carboxamide + L-glutamine = D-erythro-1-(imidazol-4-yl)glycerol 3-phosphate + 5-amino-1-(5-phospho-beta-D-ribosyl)imidazole-4-carboxamide + L-glutamate + H(+). It participates in amino-acid biosynthesis; L-histidine biosynthesis; L-histidine from 5-phospho-alpha-D-ribose 1-diphosphate: step 5/9. Functionally, IGPS catalyzes the conversion of PRFAR and glutamine to IGP, AICAR and glutamate. The HisF subunit catalyzes the cyclization activity that produces IGP and AICAR from PRFAR using the ammonia provided by the HisH subunit. The protein is Imidazole glycerol phosphate synthase subunit HisF of Rhodopseudomonas palustris (strain BisA53).